The following is a 235-amino-acid chain: Kinetochore protein Spc25 (235 aa).

Positions 44-106 (KNILSAKEAI…DMEAQLLRHT (63 aa)) form a coiled coil. A disordered region spans residues 193 to 216 (EVAGASPVTPSGSERPKATSKHSN).

This sequence belongs to the SPC25 family. Component of the Ndc80 complex, which is composed of Ndc80, Nuf2 and Spc25.

Its subcellular location is the nucleus. The protein localises to the chromosome. The protein resides in the centromere. It is found in the kinetochore. Acts as a component of the essential kinetochore-associated Ndc80 complex, which is required for chromosome segregation and spindle checkpoint activity during meiosis and mitosis. Required for kinetochore integrity and the organization of stable microtubule binding sites in the outer plate of the kinetochore. Participates in SAC signaling that responds specifically to disruptions in spindle microtubule dynamics. The NDC80 complex synergistically enhances the affinity of the SKA1 complex for microtubules and may allow the NDC80 complex to track depolymerizing microtubules. The polypeptide is Kinetochore protein Spc25 (Drosophila pseudoobscura pseudoobscura (Fruit fly)).